The sequence spans 331 residues: Phenol 2-monooxygenase, oxygenase component DmpL (331 aa).

It belongs to the TmoE/XamoE family. As to quaternary structure, the multicomponent enzyme phenol hydroxylase is formed by DmpL (P1 component), DmpM (P2 component), DmpN (P3 component), DmpO (P4 component) and DmpP (P5 component). The oxygenase component is a dimer composed of three subunits, DmpL, DmpN and DmpO (DmpLNO). DmpL interacts with the auxiliary protein DmpK (P0 component).

The catalysed reaction is phenol + NADH + O2 + H(+) = catechol + NAD(+) + H2O. It participates in aromatic compound metabolism; phenol degradation. Its activity is regulated as follows. Requires DmpM for efficient turnover. The activity of DmpLNO oxygenase is inhibited by dithiothreitol (DTT) by a mechanism apparently involving H(2)O(2) generation. Part of a multicomponent enzyme which catalyzes the degradation of phenol and some of its methylated derivatives. DmpL, DmpN and DmpO form the oxygenase component of the complex. Required for growth on phenol and for in vitro phenol hydroxylase activity. The sequence is that of Phenol 2-monooxygenase, oxygenase component DmpL from Pseudomonas sp. (strain CF600).